The primary structure comprises 128 residues: MFS18 protein (128 aa).

The signal sequence occupies residues 1 to 25; sequence MARSSKMMVAARLLALALAVSTAEA. Positions 26–79 are disordered; the sequence is RNIKTTTTEKKDDAVVQPQTFPPFDRLGGGASPAFGGLPGGSIPGSSIPGFSMP. The span at 52–68 shows a compositional bias: gly residues; the sequence is LGGGASPAFGGLPGGSI. 11 repeat units span residues 64–67, 64–75, 69–72, 69–80, 74–77, 79–82, 81–92, 86–89, 91–94, 104–107, and 113–116. The segment at 64 to 92 is 3 X approximate tandem repeats; that stretch reads PGGSIPGSSIPGFSMPGSGSSLPGFSLPG. Residues 64–116 form an 8 X 4 AA approximate repeats region; that stretch reads PGGSIPGSSIPGFSMPGSGSSLPGFSLPGSGTMPLFGGGSPGFSGFGGMPGSP. Residues 69 to 79 are compositionally biased toward low complexity; it reads PGSSIPGFSMP. Residues 99–113 are compositionally biased toward gly residues; the sequence is FGGGSPGFSGFGGMP. Residues 99 to 128 are disordered; the sequence is FGGGSPGFSGFGGMPGSPTAGSVPEHANKP.

In terms of tissue distribution, enhanced expression in male flowers. Accumulates in the glumes and in anther walls, paleas and lemmas of mature florets.

The sequence is that of MFS18 protein (MFS18) from Zea mays (Maize).